The following is a 566-amino-acid chain: Protein RocB (566 aa).

Its function is as follows. Involved in arginine degradative pathway. The chain is Protein RocB (rocB) from Bacillus subtilis (strain 168).